A 445-amino-acid chain; its full sequence is Glycine--tRNA ligase (445 aa).

2 residues coordinate substrate: arginine 97 and glutamate 145. Residues 177-179, 187-192, 262-263, and 308-311 each bind ATP; these read RNE, FRTCEF, EI, and GLTR. Residue 192–196 coordinates substrate; the sequence is FEQME. A substrate-binding site is contributed by 304 to 308; it reads ETSAG.

Belongs to the class-II aminoacyl-tRNA synthetase family. In terms of assembly, homodimer.

Its subcellular location is the cytoplasm. It catalyses the reaction tRNA(Gly) + glycine + ATP = glycyl-tRNA(Gly) + AMP + diphosphate. In terms of biological role, catalyzes the attachment of glycine to tRNA(Gly). In Borreliella afzelii (strain PKo) (Borrelia afzelii), this protein is Glycine--tRNA ligase.